Reading from the N-terminus, the 512-residue chain is Cytochrome P450 77A4 (512 aa).

The chain crosses the membrane as a helical span at residues 9-29 (PTSLDFTFFAIIISGFVFIIT). Cysteine 456 contributes to the heme binding site.

It belongs to the cytochrome P450 family. It depends on heme as a cofactor.

It localises to the membrane. In terms of biological role, catalyzes the epoxidation of physiological unsaturated fatty acids in vitro. Can use laurate, oleate, linoleate, linolenate and vernolate as substrate. This chain is Cytochrome P450 77A4 (CYP77A4), found in Arabidopsis thaliana (Mouse-ear cress).